The primary structure comprises 88 residues: Large ribosomal subunit protein bL31B (88 aa).

This sequence belongs to the bacterial ribosomal protein bL31 family. Type B subfamily. In terms of assembly, part of the 50S ribosomal subunit.

In Pasteurella multocida (strain Pm70), this protein is Large ribosomal subunit protein bL31B.